We begin with the raw amino-acid sequence, 777 residues long: Transcriptional regulator QRICH1 (777 aa).

The residue at position 1 (Met-1) is an N-acetylmethionine. Residues 6 to 48 form the CARD domain; the sequence is ENTISFEEYIRVKARSVPQHRMKEFLDSLASKGPEALQEFQQT. Disordered regions lie at residues 140–164 and 219–240; these read IQGQ…SPSQ and ALSP…VGTA. Residue Ser-346 is modified to Phosphoserine. Residues Lys-354 and Lys-359 each participate in a glycyl lysine isopeptide (Lys-Gly) (interchain with G-Cter in SUMO2) cross-link. Residues 420-440 are disordered; that stretch reads QQQPQQQTAQEQTPPPQQQQQ. A Phosphoserine modification is found at Ser-465.

In terms of tissue distribution, expressed highly in prefrontal cortex, craniofacial area and near the limbs of mouse embryos. Expressed in heart, skeletal muscle, liver, kidney, lung, brain, spleen, intestine and growth plate in mice.

The protein resides in the nucleus. The protein localises to the cytoplasm. It is found in the cell membrane. Its function is as follows. Transcriptional regulator that acts as a mediator of the integrated stress response (ISR) through transcriptional control of protein homeostasis under conditions of ER stress. Controls the outcome of the unfolded protein response (UPR), an ER-stress response pathway that either promotes recovery of ER homeostasis and cell survival, or triggers the terminal UPR which elicits programmed cell death when ER stress is prolonged and unresolved. ER stress induces QRICH1 translation by a ribosome translation re-initiation mechanism in response to EIF2S1/eIF-2-alpha phosphorylation, and stress-induced QRICH1 regulates a transcriptional program associated with protein translation, protein secretion-mediated proteotoxicity and cell death during the terminal UPR. May cooperate with ATF4 transcription factor signaling to regulate ER homeostasis which is critical for cell viability. Up-regulates CASP3/caspase-3 activity in epithelial cells under ER stress. Central regulator of proteotoxicity associated with ER stress-mediated inflammatory diseases in the intestines and liver. Involved in chondrocyte hypertrophy, a process required for normal longitudinal bone growth. This is Transcriptional regulator QRICH1 from Mus musculus (Mouse).